A 394-amino-acid polypeptide reads, in one-letter code: Formate-dependent phosphoribosylglycinamide formyltransferase (394 aa).

Residues 21-22 (EL) and Glu81 each bind N(1)-(5-phospho-beta-D-ribosyl)glycinamide. Residues Arg113, Lys154, 159–164 (SSGKGQ), 194–197 (EEFI), and Glu202 each bind ATP. The 190-residue stretch at 118 to 307 (RLAAEELGLP…QFELHVRAIL (190 aa)) folds into the ATP-grasp domain. Mg(2+) is bound by residues Glu266 and Glu278. N(1)-(5-phospho-beta-D-ribosyl)glycinamide contacts are provided by residues Asp285, Lys355, and 362–363 (RR).

This sequence belongs to the PurK/PurT family. As to quaternary structure, homodimer.

It catalyses the reaction N(1)-(5-phospho-beta-D-ribosyl)glycinamide + formate + ATP = N(2)-formyl-N(1)-(5-phospho-beta-D-ribosyl)glycinamide + ADP + phosphate + H(+). The protein operates within purine metabolism; IMP biosynthesis via de novo pathway; N(2)-formyl-N(1)-(5-phospho-D-ribosyl)glycinamide from N(1)-(5-phospho-D-ribosyl)glycinamide (formate route): step 1/1. In terms of biological role, involved in the de novo purine biosynthesis. Catalyzes the transfer of formate to 5-phospho-ribosyl-glycinamide (GAR), producing 5-phospho-ribosyl-N-formylglycinamide (FGAR). Formate is provided by PurU via hydrolysis of 10-formyl-tetrahydrofolate. The sequence is that of Formate-dependent phosphoribosylglycinamide formyltransferase from Pelobacter propionicus (strain DSM 2379 / NBRC 103807 / OttBd1).